The sequence spans 159 residues: uncharacterized protein (159 aa).

This is an uncharacterized protein from Homo sapiens (Human).